The primary structure comprises 257 residues: Probable septum site-determining protein MinC (257 aa).

This sequence belongs to the MinC family. In terms of assembly, interacts with MinD and FtsZ.

Cell division inhibitor that blocks the formation of polar Z ring septums. Rapidly oscillates between the poles of the cell to destabilize FtsZ filaments that have formed before they mature into polar Z rings. Prevents FtsZ polymerization. The chain is Probable septum site-determining protein MinC from Burkholderia lata (strain ATCC 17760 / DSM 23089 / LMG 22485 / NCIMB 9086 / R18194 / 383).